Consider the following 800-residue polypeptide: Putative antiporter subunit mnhA2 (800 aa).

The next 20 helical transmembrane spans lie at 1–21 (MSLV…LLMS), 33–53 (IALV…PSVA), 78–98 (GLSL…FFYA), 118–138 (LFMF…MYIF), 167–187 (FMIT…LYIM), 207–227 (GLFI…SAQF), 241–261 (TPVS…FLLL), 273–293 (YVYI…ITAL), 300–320 (GILA…VGIG), 331–351 (IASI…NHAI), 387–407 (LVMT…GFLS), 424–444 (FSLI…VFTF), 472–492 (PWLF…IFFV), 527–547 (GFNI…VLAI), 595–615 (IIMT…RIGL), 627–647 (GALE…LIFI), 651–671 (LTMV…FIAM), 676–696 (LALT…VSFS), 712–732 (IIKI…IFIT), and 768–788 (LDTL…YTLL).

The protein belongs to the CPA3 antiporters (TC 2.A.63) subunit A family. May form a heterooligomeric complex that consists of seven subunits: mnhA2, mnhB2, mnhC2, mnhD2, mnhE2, mnhF2 and mnhG2.

It is found in the cell membrane. In Staphylococcus aureus (strain MSSA476), this protein is Putative antiporter subunit mnhA2 (mnhA2).